We begin with the raw amino-acid sequence, 544 residues long: 4-coumarate--CoA ligase 2 (544 aa).

Residues Ser190, Ser191, Gly192, Thr193, Thr194, and Lys198 each coordinate ATP. Residue Tyr240 coordinates (E)-4-coumaroyl-AMP. CoA is bound at residue Lys261. The tract at residues 263–332 is SBD1; that stretch reads DIVPFLELIQ…AKFPNAKLGQ (70 aa). (E)-4-coumaroyl-AMP-binding residues include Ala310, Gln332, Gly333, Thr337, and Met345. 3 residues coordinate ATP: Gln332, Gly333, and Thr337. An SBD2 region spans residues 333–400; sequence GYGMTEAGPV…IRGDQIMKGY (68 aa). The ATP site is built by Asp421 and Arg436. The (E)-4-coumaroyl-AMP site is built by Lys438 and Lys442. The CoA site is built by Lys444 and Gly445. An ATP-binding site is contributed by Lys527.

The protein belongs to the ATP-dependent AMP-binding enzyme family. The cofactor is Mg(2+).

It catalyses the reaction (E)-4-coumarate + ATP + CoA = (E)-4-coumaroyl-CoA + AMP + diphosphate. The enzyme catalyses (E)-4-coumarate + ATP + H(+) = (E)-4-coumaroyl-AMP + diphosphate. It carries out the reaction (E)-4-coumaroyl-AMP + CoA = (E)-4-coumaroyl-CoA + AMP + H(+). It participates in phytoalexin biosynthesis; 3,4',5-trihydroxystilbene biosynthesis; 3,4',5-trihydroxystilbene from trans-4-coumarate: step 1/2. In terms of biological role, carboxylate--CoA ligase that may use 4-coumarate as substrate. Follows a two-step reaction mechanism, wherein the carboxylate substrate first undergoes adenylation by ATP, followed by a thioesterification in the presence of CoA to yield the final CoA thioester. The chain is 4-coumarate--CoA ligase 2 (4CL2) from Petroselinum crispum (Parsley).